The sequence spans 1173 residues: WASH complex subunit 4 (1173 aa).

Residue A2 is modified to N-acetylalanine. S7 is subject to Phosphoserine. Residues 705–1173 (KDLALFFSLN…STVSADPVVK (469 aa)) form a sufficient for interaction with WASHC5 region. A coiled-coil region spans residues 1135-1161 (RADKTAAEENQEKKEKEEETKTSNGDL). A compositionally biased stretch (basic and acidic residues) spans 1142–1155 (EENQEKKEKEEETK). The tract at residues 1142–1173 (EENQEKKEKEEETKTSNGDLSDSTVSADPVVK) is disordered. At T1154 the chain carries Phosphothreonine. Over residues 1157-1167 (SNGDLSDSTVS) the composition is skewed to polar residues.

This sequence belongs to the SWIP family. Component of the WASH core complex also described as WASH regulatory complex (SHRC) composed of WASH (WASHC1, WASH2P or WASH3P), WASHC2 (WASHC2A or WASHC2C), WASHC3, WASHC4 and WASHC5. The WASH core complex associates via WASHC2 with the F-actin-capping protein dimer (formed by CAPZA1, CAPZA2 or CAPZA3 and CAPZB) in a transient or substoichiometric manner which was initially described as WASH complex.

It localises to the early endosome. Acts as a component of the WASH core complex that functions as a nucleation-promoting factor (NPF) at the surface of endosomes, where it recruits and activates the Arp2/3 complex to induce actin polymerization, playing a key role in the fission of tubules that serve as transport intermediates during endosome sorting. This Homo sapiens (Human) protein is WASH complex subunit 4.